The primary structure comprises 245 residues: Carboxy-S-adenosyl-L-methionine synthase (245 aa).

S-adenosyl-L-methionine contacts are provided by residues Tyr42, Gly67–Ser69, Asp92–Asn93, Asp120–Ile121, Asn135, and Arg202.

It belongs to the class I-like SAM-binding methyltransferase superfamily. Cx-SAM synthase family. In terms of assembly, homodimer.

The catalysed reaction is prephenate + S-adenosyl-L-methionine = carboxy-S-adenosyl-L-methionine + 3-phenylpyruvate + H2O. Functionally, catalyzes the conversion of S-adenosyl-L-methionine (SAM) to carboxy-S-adenosyl-L-methionine (Cx-SAM). The polypeptide is Carboxy-S-adenosyl-L-methionine synthase (Vibrio vulnificus (strain CMCP6)).